We begin with the raw amino-acid sequence, 358 residues long: DNA polymerase IV (358 aa).

The UmuC domain maps to 4-185 (IIHVDMDCFY…LPLIKIPGVG (182 aa)). D8 and D103 together coordinate Mg(2+). E104 is an active-site residue.

The protein belongs to the DNA polymerase type-Y family. Monomer. It depends on Mg(2+) as a cofactor.

It localises to the cytoplasm. The catalysed reaction is DNA(n) + a 2'-deoxyribonucleoside 5'-triphosphate = DNA(n+1) + diphosphate. In terms of biological role, poorly processive, error-prone DNA polymerase involved in untargeted mutagenesis. Copies undamaged DNA at stalled replication forks, which arise in vivo from mismatched or misaligned primer ends. These misaligned primers can be extended by PolIV. Exhibits no 3'-5' exonuclease (proofreading) activity. May be involved in translesional synthesis, in conjunction with the beta clamp from PolIII. In Shewanella halifaxensis (strain HAW-EB4), this protein is DNA polymerase IV.